A 67-amino-acid chain; its full sequence is Protein SlyX homolog (67 aa).

This sequence belongs to the SlyX family.

The chain is Protein SlyX homolog from Thiobacillus denitrificans (strain ATCC 25259 / T1).